The primary structure comprises 653 residues: Multidomain regulatory protein Rv1364c (653 aa).

Phosphothreonine; by PknD occurs at positions 54 and 81. Positions 86 to 142 (SGSEWRLQTDYDGSGVEERYFDFVVTPRRRADGSIEGVQLIVDDVTSRVRARQAAEA) constitute a PAC domain. One can recognise a PPM-type phosphatase domain in the interval 177–396 (DIAAEYLVAA…DDVTLLAMQR (220 aa)). Mn(2+)-binding residues include D211 and V212. Phosphothreonine; by PknD is present on T299. Mn(2+) contacts are provided by D328 and D387. A Phosphothreonine; by PknD modification is found at T390. The tract at residues 397–544 (RAPTPPLHIT…TMVRRAAFQQ (148 aa)) is anti-sigma factor kinase region. The residue at position 506 (S506) is a Phosphoserine; by PknD. 2 positions are modified to phosphothreonine; by PknD: T520 and T568. The 108-residue stretch at 546–653 (IDSEFVSLVE…ADTEDIFAQE (108 aa)) folds into the STAS domain. S600 bears the Phosphoserine; by autocatalysis mark.

Exists in solution as both monomer and dimer. Both the phosphorylated and unphosphorylated proteins form extended dimers. Interacts with SigF. Can efficiently bind to SigF independently of its autophosphorylation. Interaction between SigF and Rv1364c is reduced significantly upon the phosphorylation of both proteins by PknD. The cofactor is Mn(2+). Mg(2+) serves as cofactor. Autophosphorylated. Phosphorylated by PknD on multiple threonine and serine residues. Phosphorylation is antagonized by the phosphatase activity.

The enzyme catalyses O-phospho-L-seryl-[protein] + H2O = L-seryl-[protein] + phosphate. The catalysed reaction is O-phospho-L-threonyl-[protein] + H2O = L-threonyl-[protein] + phosphate. It catalyses the reaction L-seryl-[protein] + ATP = O-phospho-L-seryl-[protein] + ADP + H(+). It carries out the reaction L-threonyl-[protein] + ATP = O-phospho-L-threonyl-[protein] + ADP + H(+). With respect to regulation, the phosphatase domain is activated by the anti-sigma factor kinase domain. Functionally, primarily acts as an independent SigF regulator that is sensitive to the osmosensory signal, mediating the cross talk of PknD with the SigF regulon. Possesses both phosphatase and kinase activities. The kinase domain functions as a classic anti-sigma factor-like kinase to phosphorylate the anti-anti-sigma factor domain at the canonical regulatory site, and the phosphatase domain antagonizes this activity. This is Multidomain regulatory protein Rv1364c from Mycobacterium tuberculosis (strain ATCC 25618 / H37Rv).